The chain runs to 228 residues: Ankyrin repeat domain-containing protein 46 (228 aa).

ANK repeat units lie at residues 11-40 (QTNV…DPNI), 44-73 (RGRT…DLLA), 77-103 (QGNT…KIDI), and 107-138 (QGAT…EVKG). Residues 195-215 (VLLLIFVIALLSLGIAYYVSG) form a helical membrane-spanning segment.

The protein resides in the membrane. This Pongo abelii (Sumatran orangutan) protein is Ankyrin repeat domain-containing protein 46 (ANKRD46).